A 244-amino-acid chain; its full sequence is 5-oxoprolinase subunit A (244 aa).

Belongs to the LamB/PxpA family. In terms of assembly, forms a complex composed of PxpA, PxpB and PxpC.

The catalysed reaction is 5-oxo-L-proline + ATP + 2 H2O = L-glutamate + ADP + phosphate + H(+). Catalyzes the cleavage of 5-oxoproline to form L-glutamate coupled to the hydrolysis of ATP to ADP and inorganic phosphate. This Escherichia coli O6:K15:H31 (strain 536 / UPEC) protein is 5-oxoprolinase subunit A.